Here is a 507-residue protein sequence, read N- to C-terminus: RNA-splicing ligase RtcB homolog (507 aa).

Mn(2+) is bound by residues D121, C124, H229, H261, and H355. 228–232 (NHYAE) lines the GMP pocket. GMP-binding positions include 355–356 (HN), 404–407 (GGTM), S411, 430–433 (HGAG), and K506. The active-site GMP-histidine intermediate is the H430.

The protein belongs to the RtcB family. As to quaternary structure, catalytic component of the tRNA-splicing ligase complex. The cofactor is Mn(2+).

The enzyme catalyses a 3'-end 3'-phospho-ribonucleotide-RNA + a 5'-end dephospho-ribonucleoside-RNA + GTP = a ribonucleotidyl-ribonucleotide-RNA + GMP + diphosphate. It catalyses the reaction a 3'-end 2',3'-cyclophospho-ribonucleotide-RNA + a 5'-end dephospho-ribonucleoside-RNA + GTP + H2O = a ribonucleotidyl-ribonucleotide-RNA + GMP + diphosphate + H(+). Its function is as follows. Catalytic subunit of the tRNA-splicing ligase complex that acts by directly joining spliced tRNA halves to mature-sized tRNAs by incorporating the precursor-derived splice junction phosphate into the mature tRNA as a canonical 3',5'-phosphodiester. May act as an RNA ligase with broad substrate specificity, and may function toward other RNAs. This Micromonas pusilla (strain CCMP1545) (Picoplanktonic green alga) protein is RNA-splicing ligase RtcB homolog.